The sequence spans 101 residues: Apolipoprotein C-III (101 aa).

Residues 1–20 form the signal peptide; it reads MQPRMLLIVALVALLASARA. Methionine 64 bears the Methionine sulfoxide mark. Residues 69–101 are lipid-binding; sequence KSLKGYWSKFTDKFTGLWESGPEDQLTTPTLEP. An O-linked (GalNAc...) threonine glycan is attached at threonine 96.

The protein belongs to the apolipoprotein C3 family. In terms of processing, the most abundant glycoforms are characterized by an O-linked disaccharide galactose linked to N-acetylgalactosamine (Gal-GalNAc), further modified with up to 3 sialic acid residues. Less abundant glycoforms are characterized by more complex and fucosylated glycan moieties. O-glycosylated on Thr-96 with a core 1 or possibly core 8 glycan. As to expression, synthesized predominantly in liver and to a lesser degree in intestine.

Its subcellular location is the secreted. Component of triglyceride-rich very low density lipoproteins (VLDL) and high density lipoproteins (HDL) in plasma. Plays a multifaceted role in triglyceride homeostasis. Intracellularly, promotes hepatic very low density lipoprotein 1 (VLDL1) assembly and secretion; extracellularly, attenuates hydrolysis and clearance of triglyceride-rich lipoproteins (TRLs). Impairs the lipolysis of TRLs by inhibiting lipoprotein lipase and the hepatic uptake of TRLs by remnant receptors. Formed of several curved helices connected via semiflexible hinges, so that it can wrap tightly around the curved micelle surface and easily adapt to the different diameters of its natural binding partners. The sequence is that of Apolipoprotein C-III (Apoc3) from Rattus norvegicus (Rat).